We begin with the raw amino-acid sequence, 563 residues long: Minor fimbrium subunit Mfa1 (563 aa).

The first 19 residues, 1 to 19 (MKLNKMFLVGALLSLGFAS), serve as a signal peptide directing secretion. A lipid anchor (N-palmitoyl cysteine) is attached at Cys-20. Cys-20 is lipidated: S-diacylglycerol cysteine. Positions 20 to 49 (CSKEGNGPDPDNAAKSYMSMTLSMPMGSAR) are excised as a propeptide. The tract at residues 504-543 (LVPDPDPSNPENPNNPDPNPDEPGTPVPTDPENPLPDQDT) is disordered. Residues 505-537 (VPDPDPSNPENPNNPDPNPDEPGTPVPTDPENP) show a composition bias toward pro residues.

It belongs to the bacteroidetes fimbrillin superfamily. In terms of assembly, structural component of the fimbrial stalk. Minor fimbriae are composed of a structural subunit, most often Mfa1, and the accessory subunits Mfa3, Mfa4 and Mfa5. Mfa1 interacts with Mfa2; this anchors the fimbrium in the membrane. Fimbrium assembly occurs by linear, head-to-tail oligomerization of fimbrial subunits. This is mediated via insertion of a C-terminal beta-strand from one subunit into a groove in the N-terminal domain of the following subunit. Interacts with S.gordonii ssp5.

The protein localises to the fimbrium. It is found in the cell outer membrane. Functionally, structural subunit of the minor fimbriae. These filamentous pili are attached to the cell surface; they mediate biofilm formation, adhesion onto host cells and onto other bacteria that are part of the oral microbiome. They play an important role in invasion of periodontal tissues and are recognized as major virulence factors. Mfa1 orthologs from different strains have highly divergent sequences, and this correlates with pathogenicity. The sequence is that of Minor fimbrium subunit Mfa1 from Porphyromonas gingivalis (strain ATCC 33277 / DSM 20709 / CIP 103683 / JCM 12257 / NCTC 11834 / 2561).